The chain runs to 171 residues: Large ribosomal subunit protein uL10 (171 aa).

Belongs to the universal ribosomal protein uL10 family. In terms of assembly, part of the ribosomal stalk of the 50S ribosomal subunit. The N-terminus interacts with L11 and the large rRNA to form the base of the stalk. The C-terminus forms an elongated spine to which L12 dimers bind in a sequential fashion forming a multimeric L10(L12)X complex.

Forms part of the ribosomal stalk, playing a central role in the interaction of the ribosome with GTP-bound translation factors. The protein is Large ribosomal subunit protein uL10 of Hyphomonas neptunium (strain ATCC 15444).